The sequence spans 458 residues: Glutamyl-tRNA reductase (458 aa).

Substrate is bound by residues 49–52 (TCNR), Ser109, 114–116 (EQQ), and Gln120. Cys50 functions as the Nucleophile in the catalytic mechanism. 191–196 (GAGAMA) contacts NADP(+).

This sequence belongs to the glutamyl-tRNA reductase family. As to quaternary structure, homodimer.

The enzyme catalyses (S)-4-amino-5-oxopentanoate + tRNA(Glu) + NADP(+) = L-glutamyl-tRNA(Glu) + NADPH + H(+). It functions in the pathway porphyrin-containing compound metabolism; protoporphyrin-IX biosynthesis; 5-aminolevulinate from L-glutamyl-tRNA(Glu): step 1/2. Functionally, catalyzes the NADPH-dependent reduction of glutamyl-tRNA(Glu) to glutamate 1-semialdehyde (GSA). The chain is Glutamyl-tRNA reductase from Corynebacterium aurimucosum (strain ATCC 700975 / DSM 44827 / CIP 107346 / CN-1) (Corynebacterium nigricans).